The chain runs to 396 residues: Tryptophan synthase beta chain (396 aa).

Position 96 is an N6-(pyridoxal phosphate)lysine (lysine 96).

Belongs to the TrpB family. Tetramer of two alpha and two beta chains. The cofactor is pyridoxal 5'-phosphate.

It catalyses the reaction (1S,2R)-1-C-(indol-3-yl)glycerol 3-phosphate + L-serine = D-glyceraldehyde 3-phosphate + L-tryptophan + H2O. Its pathway is amino-acid biosynthesis; L-tryptophan biosynthesis; L-tryptophan from chorismate: step 5/5. The beta subunit is responsible for the synthesis of L-tryptophan from indole and L-serine. This chain is Tryptophan synthase beta chain, found in Azobacteroides pseudotrichonymphae genomovar. CFP2.